The chain runs to 249 residues: 2,3-bisphosphoglycerate-dependent phosphoglycerate mutase (249 aa).

Substrate contacts are provided by residues 10–17 (RHGESEWN), 23–24 (TG), arginine 62, 89–92 (ERHY), lysine 100, 116–117 (RR), and 185–186 (GN). Histidine 11 functions as the Tele-phosphohistidine intermediate in the catalytic mechanism. Catalysis depends on glutamate 89, which acts as the Proton donor/acceptor.

Belongs to the phosphoglycerate mutase family. BPG-dependent PGAM subfamily. Homodimer.

It carries out the reaction (2R)-2-phosphoglycerate = (2R)-3-phosphoglycerate. The protein operates within carbohydrate degradation; glycolysis; pyruvate from D-glyceraldehyde 3-phosphate: step 3/5. In terms of biological role, catalyzes the interconversion of 2-phosphoglycerate and 3-phosphoglycerate. The chain is 2,3-bisphosphoglycerate-dependent phosphoglycerate mutase from Hamiltonella defensa subsp. Acyrthosiphon pisum (strain 5AT).